We begin with the raw amino-acid sequence, 663 residues long: Rho GTPase-activating protein 18 (663 aa).

The segment at Y15–S37 is disordered. A phosphoserine mark is found at S66 and S69. Phosphothreonine is present on T158. Disordered regions lie at residues R179–E227 and Q243–G277. Basic and acidic residues-rich tracts occupy residues N197–P219 and E245–D258. Position 263 is a phosphoserine (S263). The region spanning V324–W523 is the Rho-GAP domain. S610 carries the post-translational modification Phosphoserine.

As to quaternary structure, interacts with MPHOSPH6.

Its subcellular location is the cytoplasm. Rho GTPase activating protein that suppresses F-actin polymerization by inhibiting Rho. Rho GTPase activating proteins act by converting Rho-type GTPases to an inactive GDP-bound state. Plays a key role in tissue tension and 3D tissue shape by regulating cortical actomyosin network formation. Acts downstream of YAP1 and inhibits actin polymerization, which in turn reduces nuclear localization of YAP1. Regulates cell shape, spreading, and migration. The sequence is that of Rho GTPase-activating protein 18 from Homo sapiens (Human).